The following is a 270-amino-acid chain: 3-methyl-2-oxobutanoate hydroxymethyltransferase (270 aa).

Residues Asp50 and Asp89 each coordinate Mg(2+). 3-methyl-2-oxobutanoate contacts are provided by residues 50–51 (DS), Asp89, and Lys118. Glu120 is a Mg(2+) binding site. Glu187 functions as the Proton acceptor in the catalytic mechanism.

This sequence belongs to the PanB family. Homodecamer; pentamer of dimers. Requires Mg(2+) as cofactor.

The protein localises to the cytoplasm. It catalyses the reaction 3-methyl-2-oxobutanoate + (6R)-5,10-methylene-5,6,7,8-tetrahydrofolate + H2O = 2-dehydropantoate + (6S)-5,6,7,8-tetrahydrofolate. Its pathway is cofactor biosynthesis; (R)-pantothenate biosynthesis; (R)-pantoate from 3-methyl-2-oxobutanoate: step 1/2. In terms of biological role, catalyzes the reversible reaction in which hydroxymethyl group from 5,10-methylenetetrahydrofolate is transferred onto alpha-ketoisovalerate to form ketopantoate. This Helicobacter acinonychis (strain Sheeba) protein is 3-methyl-2-oxobutanoate hydroxymethyltransferase.